The primary structure comprises 218 residues: Putative receptor like protein 25 (218 aa).

The Extracellular segment spans residues 1–178 (MIYTKNAYGS…QEDAKVLNWK (178 aa)). 4 LRR repeats span residues 34–58 (LTLY…IGLL), 59–82 (KALI…MANL), 83–106 (IELE…LKTL), and 108–131 (FLGY…QITG). Residue N65 is glycosylated (N-linked (GlcNAc...) asparagine). An N-linked (GlcNAc...) asparagine glycan is attached at N113. Residues 179–199 (AVATGYGPGVFFGLAIAQIIA) form a helical membrane-spanning segment. At 200-218 (SYKPEWLVKIIGPNKRRNH) the chain is on the cytoplasmic side.

Belongs to the RLP family.

Its subcellular location is the cell membrane. This is Putative receptor like protein 25 from Arabidopsis thaliana (Mouse-ear cress).